A 279-amino-acid chain; its full sequence is Polyamine aminopropyltransferase (279 aa).

The 234-residue stretch at 4–237 (IEWYPRGYGV…SPWAFLVGIK (234 aa)) folds into the PABS domain. Residue Gln29 participates in S-methyl-5'-thioadenosine binding. Spermidine-binding residues include His60 and Asp84. S-methyl-5'-thioadenosine is bound by residues Glu104 and 141–142 (DG). Asp158 functions as the Proton acceptor in the catalytic mechanism. Spermidine is bound at residue 158-161 (DSTD). Pro165 is an S-methyl-5'-thioadenosine binding site.

It belongs to the spermidine/spermine synthase family. Homodimer or homotetramer.

The protein localises to the cytoplasm. The catalysed reaction is S-adenosyl 3-(methylsulfanyl)propylamine + putrescine = S-methyl-5'-thioadenosine + spermidine + H(+). It participates in amine and polyamine biosynthesis; spermidine biosynthesis; spermidine from putrescine: step 1/1. Its function is as follows. Catalyzes the irreversible transfer of a propylamine group from the amino donor S-adenosylmethioninamine (decarboxy-AdoMet) to putrescine (1,4-diaminobutane) to yield spermidine. The chain is Polyamine aminopropyltransferase from Pyrococcus abyssi (strain GE5 / Orsay).